The primary structure comprises 248 residues: 1,2-phenylacetyl-CoA epoxidase, subunit C (248 aa).

Residues 76-79 (QFSN) and 177-179 (IAL) contribute to the substrate site.

Forms a stable heterotetramer (dimer of heterodimers) with PaaA and a stable heterodimer with PaaB.

It functions in the pathway aromatic compound metabolism; phenylacetate degradation. Functionally, component of 1,2-phenylacetyl-CoA epoxidase multicomponent enzyme system which catalyzes the reduction of phenylacetyl-CoA (PA-CoA) to form 1,2-epoxyphenylacetyl-CoA. The subunit C may be essential for structural integrity of the alpha subunit. This chain is 1,2-phenylacetyl-CoA epoxidase, subunit C (paaC), found in Escherichia coli (strain K12).